Reading from the N-terminus, the 472-residue chain is Acetyl-CoA decarbonylase/synthase complex subunit beta 2 (472 aa).

Residues C189, C192, C278, and C280 each coordinate [Ni-Fe-S] cluster.

This sequence belongs to the CdhC family. As to quaternary structure, monomer. The ACDS complex is made up of alpha, epsilon, beta, gamma and delta chains with a probable stoichiometry of (alpha(2)epsilon(2))(4)-beta(8)-(gamma(1)delta(1))(8) (Potential). Requires [Ni-Fe-S] cluster as cofactor.

The catalysed reaction is Co(I)-[corrinoid Fe-S protein] + acetyl-CoA + H(+) = methyl-Co(III)-[corrinoid Fe-S protein] + CO + CoA. The protein operates within one-carbon metabolism; methanogenesis from acetate. In terms of biological role, part of a complex that catalyzes the reversible cleavage of acetyl-CoA, allowing growth on acetate as sole source of carbon and energy. The alpha-epsilon complex generates CO from CO(2), while the beta subunit (this protein) combines the CO with CoA and a methyl group to form acetyl-CoA. The methyl group, which is incorporated into acetyl-CoA, is transferred to the beta subunit by a corrinoid iron-sulfur protein (the gamma-delta complex). The chain is Acetyl-CoA decarbonylase/synthase complex subunit beta 2 (cdhC2) from Methanosarcina thermophila.